A 230-amino-acid chain; its full sequence is Demethylmenaquinone methyltransferase (230 aa).

S-adenosyl-L-methionine contacts are provided by residues Thr57, Asp77, 101–102 (DI), and Ser118.

This sequence belongs to the class I-like SAM-binding methyltransferase superfamily. MenG/UbiE family.

It catalyses the reaction a 2-demethylmenaquinol + S-adenosyl-L-methionine = a menaquinol + S-adenosyl-L-homocysteine + H(+). It participates in quinol/quinone metabolism; menaquinone biosynthesis; menaquinol from 1,4-dihydroxy-2-naphthoate: step 2/2. In terms of biological role, methyltransferase required for the conversion of demethylmenaquinol (DMKH2) to menaquinol (MKH2). In Chlamydia caviae (strain ATCC VR-813 / DSM 19441 / 03DC25 / GPIC) (Chlamydophila caviae), this protein is Demethylmenaquinone methyltransferase.